The sequence spans 311 residues: Methenyltetrahydromethanopterin cyclohydrolase (311 aa).

Belongs to the MCH family.

The protein localises to the cytoplasm. The enzyme catalyses 5,10-methenyl-5,6,7,8-tetrahydromethanopterin + H2O = N(5)-formyl-5,6,7,8-tetrahydromethanopterin + H(+). Its function is as follows. Catalyzes the hydrolysis of methenyl-H(4)MPT(+) to 5-formyl-H(4)MPT. This is Methenyltetrahydromethanopterin cyclohydrolase from Halobacterium salinarum (strain ATCC 29341 / DSM 671 / R1).